Consider the following 600-residue polypeptide: MLSRVAKLNSRLVSLALLGSQIAFGAITYQHPDDLPSGVDYDFIVAGGGTAGLVVASRLSENSKWNVLVIEAGPSNKDTPETRIPGLADNLPGTRTDWNYTTIPQDALGGRSLNYSRAKVLGGCSTHNGMVYTRGPRDDWNYWAEITDNQALKWDNVLPIMKNTEKFSQDFLDQSMEGHIDPSVHGFDGMLSVVASYTNVSFNNLLLETTRELSDEFPFKLDLNDGKPHGLAWTQYTIDQGAERSSSATSYLESTGDNVHVLVNTHVTRIVSAGNETDFRSVEFAVDANSPKKVLTAKKELILSAGVIASPQILMNSGIGGREELQAIGVDTLIDNPSVGRNLSDQASTLLMFDTTLPNTDYDVAAALTEWDNSRSGPMAYAARLNHLTWVRLPDDKLSGSDPSSGHDSPHIEFQFRQISHQLPPADVPNQVQLPDPDSIGVVLQFSVVNLYSISLGSVTLNNNDPFADPIIDLNMFGDQKDIAILREGVRSARRMFSSQAFKNVVHETVYPPAGVTSDEDLDAFLRTSAVSYLHGVGTLSMSPHSASWGVVNPDFRVKGTTGLRVVDASVIPRAPAGHTQIPVYTFAEHASALIADSYN.

Positions 1–25 are cleaved as a signal peptide; the sequence is MLSRVAKLNSRLVSLALLGSQIAFG. N-linked (GlcNAc...) asparagine glycans are attached at residues asparagine 99 and asparagine 114. At histidine 127 the chain carries Tele-8alpha-FAD histidine. N-linked (GlcNAc...) asparagine glycans are attached at residues asparagine 199, asparagine 275, and asparagine 342. The active-site Proton acceptor is the histidine 535. The active site involves histidine 579.

Belongs to the GMC oxidoreductase family. In terms of assembly, monomer. FAD serves as cofactor. Post-translationally, N-glycosylated.

The protein localises to the secreted. It catalyses the reaction pyranose + acceptor = pyranos-2-ulose + reduced acceptor.. The enzyme catalyses pyranose + acceptor = pyranos-3-ulose + reduced acceptor.. It carries out the reaction pyranose + acceptor = pyranos-2,3-diulose + reduced acceptor.. The catalysed reaction is a pyranoside + acceptor = a pyranosid-3-ulose + reduced acceptor.. It catalyses the reaction a pyranoside + acceptor = a pyranosid-3,4-diulose + reduced acceptor.. Its function is as follows. Catalyzes the single-oxidation or sequential double oxidation reaction of carbohydrates primarily at carbon-2 and/or carbon-3 with the concomitant reduction of the flavin. The enzyme exhibits a broad sugar substrate specificity, oxidizing different aldopyranoses to the corresponding C-1, C-2, C-3 or C-1,2, C-2,3 and C-3,4 (di)dehydro sugars with substrate-specific regioselectivity. Accepts only a narrow range of electron acceptors such as substituted benzoquinones and complexed metal ions and reacts extremely slowly with O(2) as acceptor. May play a role in the natural recycling of plant matter by oxidizing all major monosaccharides in lignocellulose and by reducing quinone compounds or reactive radical species generated during lignin depolymerization. In Leucoagaricus meleagris (Western flat-topped agaric), this protein is Pyranose dehydrogenase 2.